Here is an 824-residue protein sequence, read N- to C-terminus: Frameshifted structural polyprotein (824 aa).

Over residues 1-10 (MEFIPTQTFY) the composition is skewed to polar residues. The disordered stretch occupies residues 1–104 (MEFIPTQTFY…KKKKPGRRER (104 aa)). Over residues 22-44 (RPTIQVIRPRPRPQRQAGQLAQL) the composition is skewed to low complexity. A host transcription inhibition region spans residues 36–68 (RQAGQLAQLISAVNKLTMRAVPQQKPRKNRKNK). The segment covering 60–72 (KPRKNRKNKKQKQ) has biased composition (basic residues). The Nuclear localization signal motif lies at 61 to 99 (PRKNRKNKKQKQKQQAPQNNTNQKKQPPKKKPAQKKKKP). A compositionally biased stretch (low complexity) spans 73–85 (KQQAPQNNTNQKK). The binding to the viral RNA stretch occupies residues 84–114 (KKQPPKKKPAQKKKKPGRRERMCMKIENDCI). Over residues 86–101 (QPPKKKPAQKKKKPGR) the composition is skewed to basic residues. Ribosome-binding regions lie at residues 91 to 100 (KPAQKKKKPG) and 99 to 113 (PGRR…ENDC). A disulfide bridge links C113 with C128. The Peptidase S3 domain occupies 113 to 261 (CIFEVKHEGK…KITPEGAEEW (149 aa)). H139 (charge relay system) is an active-site residue. Residues 144–154 (IDNADLAKLAF) carry the Nuclear export signal motif. D161 functions as the Charge relay system in the catalytic mechanism. Positions 183 to 193 (PEGYYNWHHGA) are dimerization of the capsid protein. S213 acts as the Charge relay system in catalysis. The interval 219–223 (DNKGR) is dimerization of the capsid protein. Residues 262 to 274 (SLAIPVMCLLANT) are functions as an uncleaved signal peptide for the precursor of protein E3/E2. The Extracellular portion of the chain corresponds to 262-692 (SLAIPVMCLL…YYYELYPTMT (431 aa)). N273, N588, and N670 each carry an N-linked (GlcNAc...) asparagine; by host glycan. Residues 693-713 (VVVVSVASFILLSMVGMAVGM) form a helical membrane-spanning segment. The Cytoplasmic segment spans residues 714 to 748 (CMCARRRCITPYELTPGATVPFLLSLICCIRTAKA). S-palmitoyl cysteine; by host attachment occurs at residues C721, C741, and C742. The transient transmembrane before p62-6K protein processing stretch occupies residues 721-741 (CITPYELTPGATVPFLLSLIC). At 749-763 (ATYQEAAVYLWNEQQ) the chain is on the extracellular side. A helical transmembrane segment spans residues 764–784 (PLFWLQALIPLAALIVLCNCL). Residues 785-795 (RLLPCCCKTLA) are Cytoplasmic-facing.

Belongs to the alphavirus frameshifted structural polyprotein family. In terms of assembly, homodimer. Homomultimer. Interacts with host karyopherin KPNA4; this interaction allows the nuclear import of the viral capsid protein. Interacts with spike glycoprotein E2. Interacts with host IRAK1; the interaction leads to inhibition of IRAK1-dependent signaling. The precursor of protein E3/E2 and E1 form a heterodimer shortly after synthesis. As to quaternary structure, processing of the precursor of protein E3/E2 into E2 and E3 results in a heterodimer of the spike glycoproteins E2 and E1. Spike at virion surface are constituted of three E2-E1 heterodimers. Interacts with 6K protein. Interacts with host MXRA8; this interaction mediates virus entry. In terms of processing, specific enzymatic cleavages in vivo yield mature proteins. Capsid protein is auto-cleaved during polyprotein translation, unmasking a signal peptide at the N-terminus of the precursor of E3/E2. The remaining polyprotein is then targeted to the host endoplasmic reticulum, where host signal peptidase cleaves it into pE2 and TF. pE2 is further processed to mature E3 and E2 by host furin in trans-Golgi vesicle. Post-translationally, palmitoylated via thioester bonds. These palmitoylations may induce disruption of the C-terminus transmembrane. This would result in the reorientation of E2 C-terminus from lumenal to cytoplasmic side. Palmitoylated via thioester bonds.

The protein resides in the virion. It localises to the host cytoplasm. It is found in the host cell membrane. The protein localises to the host nucleus. Its subcellular location is the virion membrane. The enzyme catalyses Autocatalytic release of the core protein from the N-terminus of the togavirus structural polyprotein by hydrolysis of a -Trp-|-Ser- bond.. Forms an icosahedral capsid with a T=4 symmetry composed of 240 copies of the capsid protein surrounded by a lipid membrane through which penetrate 80 spikes composed of trimers of E1-E2 heterodimers. The capsid protein binds to the viral RNA genome at a site adjacent to a ribosome binding site for viral genome translation following genome release. Possesses a protease activity that results in its autocatalytic cleavage from the nascent structural protein. Following its self-cleavage, the capsid protein transiently associates with ribosomes, and within several minutes the protein binds to viral RNA and rapidly assembles into icosahedric core particles. The resulting nucleocapsid eventually associates with the cytoplasmic domain of the spike glycoprotein E2 at the cell membrane, leading to budding and formation of mature virions. In case of infection, new virions attach to target cells and after clathrin-mediated endocytosis their membrane fuses with the host endosomal membrane. This leads to the release of the nucleocapsid into the cytoplasm, followed by an uncoating event necessary for the genomic RNA to become accessible. The uncoating might be triggered by the interaction of capsid proteins with ribosomes. Binding of ribosomes would release the genomic RNA since the same region is genomic RNA-binding and ribosome-binding. Specifically inhibits interleukin-1 receptor-associated kinase 1/IRAK1-dependent signaling during viral entry, representing a means by which the alphaviruses may evade innate immune detection and activation prior to viral gene expression. Functionally, provides the signal sequence for the translocation of the precursor of protein E3/E2 to the host endoplasmic reticulum. Furin-cleaved E3 remains associated with spike glycoprotein E1 and mediates pH protection of the latter during the transport via the secretory pathway. After virion release from the host cell, the assembly protein E3 is gradually released in the extracellular space. Its function is as follows. Plays a role in viral attachment to target host cell, by binding to the cell receptor. Synthesized as a p62 precursor which is processed by furin at the cell membrane just before virion budding, giving rise to E2-E1 heterodimer. The p62-E1 heterodimer is stable, whereas E2-E1 is unstable and dissociate at low pH. p62 is processed at the last step, presumably to avoid E1 fusion activation before its final export to cell surface. E2 C-terminus contains a transitory transmembrane that would be disrupted by palmitoylation, resulting in reorientation of the C-terminal tail from lumenal to cytoplasmic side. This step is critical since E2 C-terminus is involved in budding by interacting with capsid proteins. This release of E2 C-terminus in cytoplasm occurs lately in protein export, and precludes premature assembly of particles at the endoplasmic reticulum membrane. In terms of biological role, plays a role in viral assembly and release. The chain is Frameshifted structural polyprotein from Aedes aegypti (Yellowfever mosquito).